The chain runs to 150 residues: Large ribosomal subunit protein uL13 (150 aa).

The interval 127–150 (KGTEHPHSAQKPQPLQLNPSATAK) is disordered. Over residues 136 to 150 (QKPQPLQLNPSATAK) the composition is skewed to polar residues.

The protein belongs to the universal ribosomal protein uL13 family. In terms of assembly, part of the 50S ribosomal subunit.

In terms of biological role, this protein is one of the early assembly proteins of the 50S ribosomal subunit, although it is not seen to bind rRNA by itself. It is important during the early stages of 50S assembly. The chain is Large ribosomal subunit protein uL13 from Synechococcus sp. (strain CC9902).